The chain runs to 538 residues: Thermosome subunit beta (538 aa).

Residues 518 to 538 (SSGSSEEGMEEMGGMGGMPPM) form a disordered region. Gly residues predominate over residues 528–538 (EMGGMGGMPPM).

This sequence belongs to the TCP-1 chaperonin family. Forms a Heterooligomeric complex of two stacked eight-membered rings.

Functionally, molecular chaperone; binds unfolded polypeptides in vitro, and has a weak ATPase activity. In Methanothermobacter thermautotrophicus (strain ATCC 29096 / DSM 1053 / JCM 10044 / NBRC 100330 / Delta H) (Methanobacterium thermoautotrophicum), this protein is Thermosome subunit beta (thsB).